The primary structure comprises 206 residues: Superoxide dismutase [Mn] (206 aa).

Positions 27, 82, 168, and 172 each coordinate Mn(2+).

The protein belongs to the iron/manganese superoxide dismutase family. In terms of assembly, homodimer. It depends on Mn(2+) as a cofactor.

The catalysed reaction is 2 superoxide + 2 H(+) = H2O2 + O2. In terms of biological role, destroys superoxide anion radicals which are normally produced within the cells and which are toxic to biological systems. This chain is Superoxide dismutase [Mn] (sodA), found in Salmonella typhimurium (strain LT2 / SGSC1412 / ATCC 700720).